Here is a 702-residue protein sequence, read N- to C-terminus: Polyphosphate kinase (702 aa).

Asparagine 55 contacts ATP. Mg(2+) is bound by residues arginine 389 and arginine 419. The active-site Phosphohistidine intermediate is the histidine 449. ATP-binding residues include tyrosine 482, arginine 578, and histidine 606.

It belongs to the polyphosphate kinase 1 (PPK1) family. Mg(2+) serves as cofactor. An intermediate of this reaction is the autophosphorylated ppk in which a phosphate is covalently linked to a histidine residue through a N-P bond.

The catalysed reaction is [phosphate](n) + ATP = [phosphate](n+1) + ADP. Catalyzes the reversible transfer of the terminal phosphate of ATP to form a long-chain polyphosphate (polyP). This is Polyphosphate kinase from Bacillus cereus (strain ATCC 14579 / DSM 31 / CCUG 7414 / JCM 2152 / NBRC 15305 / NCIMB 9373 / NCTC 2599 / NRRL B-3711).